We begin with the raw amino-acid sequence, 357 residues long: 39 kDa FK506-binding nuclear protein (357 aa).

S92 carries the phosphoserine modification. The tract at residues 113 to 251 (KNSKKSEDDE…ASKDPRTITG (139 aa)) is disordered. The span at 120-182 (DDEDENESGE…QDSDDSEAEE (63 aa)) shows a compositional bias: acidic residues. Phosphoserine is present on residues S193 and S197. Positions 222–237 (EKPEAKKEQPKAKEPA) are enriched in basic and acidic residues. In terms of domain architecture, PPIase FKBP-type spans 269-357 (GKRVSVYYIG…VFEVELKAVH (89 aa)).

Belongs to the FKBP-type PPIase family. Ubiquitously expressed, highest levels in ovary.

Its subcellular location is the nucleus. It carries out the reaction [protein]-peptidylproline (omega=180) = [protein]-peptidylproline (omega=0). PPIases accelerate the folding of proteins. May function in a signal transduction cascade during early development. The polypeptide is 39 kDa FK506-binding nuclear protein (Drosophila melanogaster (Fruit fly)).